The following is a 75-amino-acid chain: MKEQSFEANLKKLEKIVAQLEDEKTDLDKSAELFEEGSALAAELSAKLKTIKFKVSEIKEKQGDLFTEEINNDDE.

The protein belongs to the XseB family. In terms of assembly, heterooligomer composed of large and small subunits.

The protein localises to the cytoplasm. It carries out the reaction Exonucleolytic cleavage in either 5'- to 3'- or 3'- to 5'-direction to yield nucleoside 5'-phosphates.. Functionally, bidirectionally degrades single-stranded DNA into large acid-insoluble oligonucleotides, which are then degraded further into small acid-soluble oligonucleotides. In Elusimicrobium minutum (strain Pei191), this protein is Exodeoxyribonuclease 7 small subunit.